The primary structure comprises 319 residues: Transcription factor VBP (319 aa).

Low complexity-rich tracts occupy residues 1–31 (MPGRAAHQEAAAAGGAAAEPTAAGGSAGAVA) and 143–158 (ASASTGSPVSSSSTAV). Disordered stretches follow at residues 1–35 (MPGRAAHQEAAAAGGAAAEPTAAGGSAGAVAQQPE) and 139–186 (EKEP…DPDC). Polar residues predominate over residues 159–180 (YQQSEAASSTESPPQNERNTPS). The region spanning 243–306 (DEKYWTRRKK…GRCKNIVSKY (64 aa)) is the bZIP domain. The segment at 245–265 (KYWTRRKKNNVAAKRSRDARR) is basic motif. The leucine-zipper stretch occupies residues 266 to 273 (LKENQITI).

It belongs to the bZIP family. PAR subfamily. As to quaternary structure, binds DNA as a homodimer or a heterodimer. Exists as a stable dimer in the absence of DNA. In terms of tissue distribution, isoform 1 and isoform 3 are expressed in a variety of somatic tissues, including liver, heart, intestine, stomach and kidney. Both isoforms are also expressed in hepatoma (LMH) cells and in embryonic fibroblast cell lines. Isoform 2 and isoform 4 are expressed in adult heart and intestine.

The protein resides in the nucleus. Functionally, transcription factor that binds to and transactivates the vitellogenin II (VTG2) promoter. Binds to the palindromic sequence 5'-GTTTACATAAAC-3'. The chain is Transcription factor VBP (TEF) from Gallus gallus (Chicken).